Here is a 430-residue protein sequence, read N- to C-terminus: Dihydroorotase (430 aa).

Positions 57 and 59 each coordinate Zn(2+). Residues 59 to 61 (HLR) and N91 each bind substrate. The Zn(2+) site is built by D151, H178, and H231. N277 is a substrate binding site. D304 is a Zn(2+) binding site. D304 is a catalytic residue. Residues H308 and 322–323 (PG) each bind substrate.

This sequence belongs to the metallo-dependent hydrolases superfamily. DHOase family. Class I DHOase subfamily. Zn(2+) is required as a cofactor.

The enzyme catalyses (S)-dihydroorotate + H2O = N-carbamoyl-L-aspartate + H(+). The protein operates within pyrimidine metabolism; UMP biosynthesis via de novo pathway; (S)-dihydroorotate from bicarbonate: step 3/3. Functionally, catalyzes the reversible cyclization of carbamoyl aspartate to dihydroorotate. The protein is Dihydroorotase of Mycobacterium tuberculosis (strain ATCC 25618 / H37Rv).